A 193-amino-acid polypeptide reads, in one-letter code: dCTP deaminase (193 aa).

DCTP is bound by residues 110 to 115, D128, 136 to 138, Y171, K178, and Q182; these read RSSLAR and VLE. The active-site Proton donor/acceptor is E138. The disordered stretch occupies residues 168–193; sequence DRPYNRRQDAKYKNQQGAVSSRIDED. Positions 170 to 179 are enriched in basic and acidic residues; sequence PYNRRQDAKY.

The protein belongs to the dCTP deaminase family. In terms of assembly, homotrimer.

The catalysed reaction is dCTP + H2O + H(+) = dUTP + NH4(+). Its pathway is pyrimidine metabolism; dUMP biosynthesis; dUMP from dCTP (dUTP route): step 1/2. Its function is as follows. Catalyzes the deamination of dCTP to dUTP. This is dCTP deaminase from Photorhabdus laumondii subsp. laumondii (strain DSM 15139 / CIP 105565 / TT01) (Photorhabdus luminescens subsp. laumondii).